The sequence spans 514 residues: Ammonium transporter 1 member 2 (514 aa).

Transmembrane regions (helical) follow at residues 56 to 76 (LLFS…LCAG), 91 to 111 (VLDA…FAFG), 140 to 160 (FFLY…GSIA), 165 to 185 (FVAY…TVSH), 212 to 232 (FAGS…GALV), 257 to 277 (VVLG…GSFL), 291 to 313 (GQWS…AALT), 328 to 348 (IDVC…CAVV), 351 to 371 (WAAI…NLLA), 380 to 400 (LEAA…TGLF), and 431 to 451 (IVQI…LFYG). T472 carries the post-translational modification Phosphothreonine.

Belongs to the ammonia transporter channel (TC 1.A.11.2) family. High expression in root.

The protein localises to the membrane. In terms of biological role, ammonium transporter probably involved in ammonium uptake from the soil. The chain is Ammonium transporter 1 member 2 (AMT1-2) from Arabidopsis thaliana (Mouse-ear cress).